The following is a 163-amino-acid chain: Interleukin-17F (163 aa).

The signal sequence occupies residues 1–30 (MTVKSLHVTAMVKYLLLLILGLAFLRETAA). N-linked (GlcNAc...) asparagine glycosylation is present at asparagine 83. 2 disulfides stabilise this stretch: cysteine 102–cysteine 152 and cysteine 107–cysteine 154.

Belongs to the IL-17 family. As to quaternary structure, homodimer; disulfide-linked. Heterodimer with IL17A (IL17A-IL17F). Forms complexes with IL17RA and IL17RC receptors with 2:1 binding stoichiometry: two receptor chains for one interleukin molecule. IL17F homodimer forms predominantly complexes with IL17RC homodimer, whereas IL17A-IL17F favors complexes with IL17RA-IL17RC. IL17RA and IL17RC chains cannot distinguish between IL17A and IL17F molecules, potentially enabling the formation of topologically distinct complexes.

The protein localises to the secreted. In terms of biological role, effector cytokine of innate and adaptive immune system involved in antimicrobial host defense and maintenance of tissue integrity. IL17A-IL17F signals via IL17RA-IL17RC heterodimeric receptor complex, triggering homotypic interaction of IL17RA and IL17RC chains with TRAF3IP2 adapter through SEFIR domains. This leads to downstream TRAF6-mediated activation of NF-kappa-B and MAPkinase pathways ultimately resulting in transcriptional activation of cytokines, chemokines, antimicrobial peptides and matrix metalloproteinases, with potential strong immune inflammation. IL17A-IL17F is primarily involved in host defense against extracellular bacteria and fungi by inducing neutrophilic inflammation. As signature effector cytokine of T-helper 17 cells (Th17), primarily induces neutrophil activation and recruitment at infection and inflammatory sites. Stimulates the production of antimicrobial beta-defensins DEFB1, DEFB103A, and DEFB104A by mucosal epithelial cells, limiting the entry of microbes through the epithelial barriers. IL17F homodimer can signal via IL17RC homodimeric receptor complex, triggering downstream activation of TRAF6 and NF-kappa-B signaling pathway. Via IL17RC induces transcriptional activation of IL33, a potent cytokine that stimulates group 2 innate lymphoid cells and adaptive T-helper 2 cells involved in pulmonary allergic response to fungi. Likely via IL17RC, promotes sympathetic innervation of peripheral organs by coordinating the communication between gamma-delta T cells and parenchymal cells. Stimulates sympathetic innervation of thermogenic adipose tissue by driving TGFB1 expression. Regulates the composition of intestinal microbiota and immune tolerance by inducing antimicrobial proteins that specifically control the growth of commensal Firmicutes and Bacteroidetes. This Callithrix jacchus (White-tufted-ear marmoset) protein is Interleukin-17F (IL17F).